The following is a 1172-amino-acid chain: DNA-directed RNA polymerases IV and V subunit 2 (1172 aa).

Mg(2+) is bound at residue D786. 4 residues coordinate Zn(2+): C1108, C1111, C1133, and C1136. The segment at 1108-1136 (CRKCKTYANVIERTPSSGRKIRGPYCRVC) adopts a C4-type zinc-finger fold.

It belongs to the RNA polymerase beta chain family. In terms of assembly, component of the RNA polymerase IV and V complexes. Interacts with SSH1, NRPD1 and NRPE1. Mostly expressed in seedlings, flowers and roots, present ubiquitously, except in sperm cells.

The protein resides in the nucleus. The catalysed reaction is RNA(n) + a ribonucleoside 5'-triphosphate = RNA(n+1) + diphosphate. DNA-dependent RNA polymerase catalyzes the transcription of DNA into RNA using the four ribonucleoside triphosphates as substrates. Second largest component of RNA polymerases IV and V which mediate short-interfering RNAs (siRNA) accumulation and subsequent RNA-directed DNA methylation-dependent (RdDM) transcriptional gene silencing (TGS) of endogenous repeated sequences, including transposable elements. Proposed to contribute to the polymerase catalytic activity and forms the polymerase active center together with the largest subunit. Also required for full erasure of methylation when the RNA trigger is withdrawn. Required for intercellular RNA interference (RNAi) leading to systemic post-transcriptional gene silencing. Involved in the maintenance of post-transcriptional RNA silencing. During interphase, mediates siRNA-independent heterochromatin association and methylation into chromocenters and condensation and cytosine methylation at pericentromeric major repeats. Required for complete maintenance of the 35S promoter homology-dependent TGS in transgenic plants and for the initial establishment of DNA methylation. This Arabidopsis thaliana (Mouse-ear cress) protein is DNA-directed RNA polymerases IV and V subunit 2 (NRPD2).